The chain runs to 324 residues: Short chain dehydrogenase/reductase dmxR8 (324 aa).

Leu33, Lys58, Asp83, and Asn110 together coordinate NADP(+). The Proton donor role is filled by Ser163. NADP(+) contacts are provided by Tyr200 and Lys204. Tyr200 acts as the Proton acceptor in catalysis. The active-site Lowers pKa of active site Tyr is Lys204.

Belongs to the short-chain dehydrogenases/reductases (SDR) family.

It functions in the pathway secondary metabolite biosynthesis. In terms of biological role, short chain dehydrogenase; part of the gene cluster that mediates the biosynthesis of the dimeric xanthones cryptosporioptides. The pathway begins with the synthesis of atrochrysone thioester by the polyketide synthase dmx-nrPKS. The atrochrysone carboxyl ACP thioesterase dmxR1 then breaks the thioester bond and releases the atrochrysone carboxylic acid from dmx-nrPKS. Atrochrysone carboxylic acid is decarboxylated by the decarboxylase dmxR15, and oxidized by the anthrone oxygenase dmxR16 to yield emodin. Emodin is then reduced to emodin hydroquinone by the oxidoreductase dmxR7. A-ring reduction by the short chain dehydrogenase dmxR18, dehydration by the scytalone dehydratase-like protein dmxR17 and probable spontaneous re-oxidation, results in overall deoxygenation to chrysophanol. Baeyer-Villiger oxidation by the Baeyer-Villiger monooxygenase (BVMO) dmxR6 then yields monodictylactone in equilibrium with monodictyphenone. In the case of the cryptosporioptides biosynthesis, monodictylactone is reduced at C-12 to an alcohol (by the short chain dehydrogenases dmxR12 or dmxR8) and hydroxylated at C-5 by dmxR9, yielding the electron-rich aromatic which could eliminate H(2)O to form the ortho-quinonemethide, followed by tautomerisation to paraquinone and complete the formal reduction to produce the 10-methylgroup. Conjugate addition of C-4a-OH to the resulting paraquinone by the monooxygenase dmxR10 then gives cyclohexadienone, which is then reduced at C-5 by the short chain dehydrogenase dmxR3 to give the dihydroxanthone. The 6,7-epoxide in the cryptosporioptides could be introduced by the cytochrome P450 monooxygenase dmxL3. The highly reducing PKS dmxL2 manufactures butyrate, which is further carboxylated by dmxL1 to form ethylmalonate. It is not yet clear whether the carboxylation occurs while the butyrate is attached to the ACP of dmxL2, but this unusual fungal metabolite could then be esterified to O-5 by the O-acetyltransferase dmxR13. Finally, dimerization performed by dmxR5 gives the observed dimers cryptosporioptides A, B and C as the final products of the pathway. This chain is Short chain dehydrogenase/reductase dmxR8, found in Cryptosporiopsis sp. (strain 8999).